We begin with the raw amino-acid sequence, 349 residues long: MSNLNGFIVVDKPKGPTSHQIDSWIRDITGEPRVGHIGTLDPGVSGVLVMALGKATKLIDIVHRESKEYVSVLRTYDKYDHDSIKSVFKEFTGKIYQIPPVRSAVSRELRIREIYNLELLEMDEKFVLFKVCCESGTYIRTLCTDIGYVLGSGGQMAELRRTRTGPFDESMCHTLQEVSDAFKLKSMGNEKLFKNIFIPMDFIFIKYPKVIVKETALKNIAHGSDIYPAGIHAITGSPKKGDVVAVYTEKNELVATGTMMVNADEIYDLKVIDIDNVLIETGDNDGKDSLVRKDNRWKDIPVQKPERKLHGNLQGSQEWKDTGNRGNPKRGGTGSKGFSSGFRKRKAKR.

Catalysis depends on Asp41, which acts as the Nucleophile. In terms of domain architecture, PUA spans 207–279; sequence YPKVIVKETA…KVIDIDNVLI (73 aa). A compositionally biased stretch (basic and acidic residues) spans 300-309; it reads IPVQKPERKL. The segment at 300-349 is disordered; it reads IPVQKPERKLHGNLQGSQEWKDTGNRGNPKRGGTGSKGFSSGFRKRKAKR.

Belongs to the pseudouridine synthase TruB family. Type 2 subfamily.

It catalyses the reaction uridine(55) in tRNA = pseudouridine(55) in tRNA. In terms of biological role, could be responsible for synthesis of pseudouridine from uracil-55 in the psi GC loop of transfer RNAs. The polypeptide is Probable tRNA pseudouridine synthase B (Picrophilus torridus (strain ATCC 700027 / DSM 9790 / JCM 10055 / NBRC 100828 / KAW 2/3)).